Reading from the N-terminus, the 281-residue chain is 3-mercaptopyruvate sulfurtransferase (281 aa).

Rhodanese domains are found at residues 17–135 (DDPE…LLEE) and 165–278 (HENT…LPVE). A substrate-binding site is contributed by Arg179. Cys238 (cysteine persulfide intermediate) is an active-site residue. The tract at residues 238 to 244 (CGSGVTA) is substrate specificity.

The protein resides in the cytoplasm. It carries out the reaction 2-oxo-3-sulfanylpropanoate + [thioredoxin]-dithiol = [thioredoxin]-disulfide + hydrogen sulfide + pyruvate + H(+). Functionally, catalyzes the transfer of sulfur from 3-mercaptopyruvate to a thiol-containing acceptor to form an intramolecular disulfide releasing hydrogen sulfide and pyruvate. This Escherichia coli O157:H7 protein is 3-mercaptopyruvate sulfurtransferase (sseA).